The following is a 444-amino-acid chain: UDP-N-acetylmuramate--L-alanine ligase (444 aa).

Position 110–116 (110–116 (GAHGKTS)) interacts with ATP.

Belongs to the MurCDEF family.

The protein localises to the cytoplasm. The catalysed reaction is UDP-N-acetyl-alpha-D-muramate + L-alanine + ATP = UDP-N-acetyl-alpha-D-muramoyl-L-alanine + ADP + phosphate + H(+). Its pathway is cell wall biogenesis; peptidoglycan biosynthesis. Its function is as follows. Cell wall formation. The sequence is that of UDP-N-acetylmuramate--L-alanine ligase from Streptococcus pneumoniae (strain JJA).